The chain runs to 247 residues: Chloride intracellular channel protein 2 (247 aa).

Residues 1–94 are N-terminal; sequence MSGLRPGTQV…KIEEFLEQTL (94 aa). The required for insertion into the membrane stretch occupies residues 1-96; that stretch reads MSGLRPGTQV…EEFLEQTLAP (96 aa). Glutamate 25 contributes to the glutathione binding site. The short motif at 30-33 is the G-site element; that stretch reads CPFC. A disulfide bridge connects residues cysteine 30 and cysteine 33. A helical transmembrane segment spans residues 32–52; that stretch reads FCQRLFMILWLKGVKFNVTTV. A GST C-terminal domain is found at 76 to 239; that stretch reads NKELKTDFIK…PEDKEIENTY (164 aa). Positions 95 to 106 are joint loop; it reads APPRYPHLSPKY. The tract at residues 107–247 is C-terminal; sequence KESFDVGCNL…TYANVAKQKS (141 aa). The interval 151-171 is foot loop; the sequence is NTPLLDEIDPDSAEEPPVSRR. Position 227 (histidine 227) interacts with glutathione.

Belongs to the chloride channel CLIC family. In terms of assembly, monomer. Interacts with TRAPPC2 and RYR2. In terms of tissue distribution, expressed in adult and fetal brain, heart, skeletal muscle, liver, lung, and spleen. Detected in adult stomach and testis. Expressed in fetal thymus and kidney.

The protein localises to the cytoplasm. It localises to the membrane. The enzyme catalyses chloride(in) = chloride(out). It catalyses the reaction tert-butyl hydroperoxide + 2 glutathione = tert-butanol + glutathione disulfide + H2O. The catalysed reaction is cumene hydroperoxide + 2 glutathione = 2-phenylpropan-2-ol + glutathione disulfide + H2O. Its activity is regulated as follows. The channel conductance is regulated by pH. In terms of biological role, in the soluble state, catalyzes glutaredoxin-like thiol disulfide exchange reactions with reduced glutathione as electron donor. Displays weak glutathione peroxidase activity. Can insert into membranes and form chloride ion channels. Membrane insertion seems to be redox-regulated and may occur only under oxidizing conditions. Modulates the activity of RYR2 and inhibits calcium influx. The polypeptide is Chloride intracellular channel protein 2 (Homo sapiens (Human)).